The primary structure comprises 115 residues: Transmembrane protein 218 (115 aa).

The next 3 membrane-spanning stretches (helical) occupy residues I5–L25, F38–P58, and Y81–Y101.

This sequence belongs to the TMEM218 family.

Its subcellular location is the membrane. The protein localises to the cell projection. It is found in the cilium. Functionally, may be involved in ciliary biogenesis or function. The protein is Transmembrane protein 218 (tmem218) of Xenopus tropicalis (Western clawed frog).